The sequence spans 407 residues: L-cysteine:1D-myo-inositol 2-amino-2-deoxy-alpha-D-glucopyranoside ligase (407 aa).

The tract at residues 1–22 (MRSWSAPDIVPLPGTGGPLRVH) is disordered. C43 contacts Zn(2+). L-cysteinyl-5'-AMP is bound by residues 43–46 (CGIT), T58, and 81–83 (NTT). Residues 45-55 (ITPYDAAHLGH) carry the 'HIGH' region motif. The short motif at 183–188 (ERGGDP) is the 'ERGGDP' region element. An L-cysteinyl-5'-AMP-binding site is contributed by W223. C227 provides a ligand contact to Zn(2+). 245-247 (GSD) serves as a coordination point for L-cysteinyl-5'-AMP. H252 provides a ligand contact to Zn(2+). V278 lines the L-cysteinyl-5'-AMP pocket. Positions 284–288 (KMSKS) match the 'KMSKS' region motif.

Belongs to the class-I aminoacyl-tRNA synthetase family. MshC subfamily. As to quaternary structure, monomer. Zn(2+) serves as cofactor.

The enzyme catalyses 1D-myo-inositol 2-amino-2-deoxy-alpha-D-glucopyranoside + L-cysteine + ATP = 1D-myo-inositol 2-(L-cysteinylamino)-2-deoxy-alpha-D-glucopyranoside + AMP + diphosphate + H(+). Functionally, catalyzes the ATP-dependent condensation of GlcN-Ins and L-cysteine to form L-Cys-GlcN-Ins. This chain is L-cysteine:1D-myo-inositol 2-amino-2-deoxy-alpha-D-glucopyranoside ligase, found in Nocardiopsis dassonvillei (strain ATCC 23218 / DSM 43111 / CIP 107115 / JCM 7437 / KCTC 9190 / NBRC 14626 / NCTC 10488 / NRRL B-5397 / IMRU 509) (Actinomadura dassonvillei).